Reading from the N-terminus, the 215-residue chain is Ribonuclease T (215 aa).

Residues 20-194 (VVIDVETAGF…YDTERTAVLF (175 aa)) enclose the Exonuclease domain. Mg(2+)-binding residues include D23, E25, H181, and D186. H181 (proton donor/acceptor) is an active-site residue.

It belongs to the RNase T family. In terms of assembly, homodimer. It depends on Mg(2+) as a cofactor.

Trims short 3' overhangs of a variety of RNA species, leaving a one or two nucleotide 3' overhang. Responsible for the end-turnover of tRNA: specifically removes the terminal AMP residue from uncharged tRNA (tRNA-C-C-A). Also appears to be involved in tRNA biosynthesis. This chain is Ribonuclease T, found in Citrobacter koseri (strain ATCC BAA-895 / CDC 4225-83 / SGSC4696).